Reading from the N-terminus, the 341-residue chain is HTH-type transcriptional repressor PurR (341 aa).

The HTH lacI-type domain occupies 2 to 56 (ATIKDVAKRANVSTTTVSHVINKTRFVAEETRNAVWAAIKELHYSPSAVARSLKV). Positions 4 to 23 (IKDVAKRANVSTTTVSHVIN) form a DNA-binding region, H-T-H motif. The DNA-binding element occupies 48-56 (SAVARSLKV). The hypoxanthine site is built by tyrosine 73, arginine 190, threonine 192, phenylalanine 221, and aspartate 275.

Homodimer.

It participates in purine metabolism; purine nucleotide biosynthesis [regulation]. Functionally, is the main repressor of the genes involved in the de novo synthesis of purine nucleotides, regulating purB, purC, purEK, purF, purHD, purL, purMN and guaBA expression. PurR is allosterically activated to bind its cognate DNA by binding the purine corepressors, hypoxanthine or guanine, thereby effecting transcription repression. This is HTH-type transcriptional repressor PurR from Klebsiella pneumoniae (strain 342).